A 294-amino-acid polypeptide reads, in one-letter code: Cytidine deaminase (294 aa).

2 CMP/dCMP-type deaminase domains span residues 48 to 168 and 186 to 294; these read DEDA…FGPK and LTGD…VLLG. 89–91 contacts substrate; the sequence is NME. Residue His-102 coordinates Zn(2+). Glu-104 serves as the catalytic Proton donor. Cys-129 and Cys-132 together coordinate Zn(2+).

The protein belongs to the cytidine and deoxycytidylate deaminase family. As to quaternary structure, homodimer. The cofactor is Zn(2+).

It catalyses the reaction cytidine + H2O + H(+) = uridine + NH4(+). It carries out the reaction 2'-deoxycytidine + H2O + H(+) = 2'-deoxyuridine + NH4(+). In terms of biological role, this enzyme scavenges exogenous and endogenous cytidine and 2'-deoxycytidine for UMP synthesis. This chain is Cytidine deaminase, found in Salmonella newport (strain SL254).